Reading from the N-terminus, the 509-residue chain is Maturase K (509 aa).

The protein belongs to the intron maturase 2 family. MatK subfamily.

Its subcellular location is the plastid. It localises to the chloroplast. In terms of biological role, usually encoded in the trnK tRNA gene intron. Probably assists in splicing its own and other chloroplast group II introns. This is Maturase K from Vatairea macrocarpa.